We begin with the raw amino-acid sequence, 542 residues long: CTP synthase (542 aa).

The tract at residues 1-265 is amidoligase domain; that stretch reads MARYVFITGG…DSEVLSAFGI (265 aa). Serine 13 serves as a coordination point for CTP. Serine 13 serves as a coordination point for UTP. Residue 14-19 participates in ATP binding; that stretch reads SLGKGI. Position 54 (tyrosine 54) interacts with L-glutamine. ATP is bound at residue aspartate 71. The Mg(2+) site is built by aspartate 71 and glutamate 139. CTP is bound by residues 146-148, 186-191, and lysine 222; these read DIE and KTKPTQ. Residues 186 to 191 and lysine 222 each bind UTP; that span reads KTKPTQ. Positions 291–541 constitute a Glutamine amidotransferase type-1 domain; it reads TIAIVGKYTG…IEAAIEQSRL (251 aa). Glycine 353 is an L-glutamine binding site. Catalysis depends on cysteine 380, which acts as the Nucleophile; for glutamine hydrolysis. L-glutamine is bound by residues 381–384, glutamate 404, and arginine 469; that span reads FGMQ. Active-site residues include histidine 514 and glutamate 516.

Belongs to the CTP synthase family. As to quaternary structure, homotetramer.

The catalysed reaction is UTP + L-glutamine + ATP + H2O = CTP + L-glutamate + ADP + phosphate + 2 H(+). It carries out the reaction L-glutamine + H2O = L-glutamate + NH4(+). The enzyme catalyses UTP + NH4(+) + ATP = CTP + ADP + phosphate + 2 H(+). It participates in pyrimidine metabolism; CTP biosynthesis via de novo pathway; CTP from UDP: step 2/2. With respect to regulation, allosterically activated by GTP, when glutamine is the substrate; GTP has no effect on the reaction when ammonia is the substrate. The allosteric effector GTP functions by stabilizing the protein conformation that binds the tetrahedral intermediate(s) formed during glutamine hydrolysis. Inhibited by the product CTP, via allosteric rather than competitive inhibition. Functionally, catalyzes the ATP-dependent amination of UTP to CTP with either L-glutamine or ammonia as the source of nitrogen. Regulates intracellular CTP levels through interactions with the four ribonucleotide triphosphates. The protein is CTP synthase of Brucella anthropi (strain ATCC 49188 / DSM 6882 / CCUG 24695 / JCM 21032 / LMG 3331 / NBRC 15819 / NCTC 12168 / Alc 37) (Ochrobactrum anthropi).